The sequence spans 276 residues: Putative pyridoxine kinase (276 aa).

Asn139 lines the ATP pocket. Residue Glu142 coordinates Mg(2+). ATP-binding positions include 176-180 (KGGKA), Asp188, Gly213, and Lys238.

It belongs to the ThiD family.

It carries out the reaction pyridoxal + ATP = pyridoxal 5'-phosphate + ADP + H(+). Its function is as follows. Phosphorylates B6 vitamers; functions in a salvage pathway. Uses pyridoxal, pyridoxine, and pyridoxamine as substrates. This chain is Putative pyridoxine kinase (pdxK), found in Staphylococcus epidermidis (strain ATCC 12228 / FDA PCI 1200).